A 334-amino-acid polypeptide reads, in one-letter code: N-acetyl-gamma-glutamyl-phosphate reductase (334 aa).

Residue C154 is part of the active site.

It belongs to the NAGSA dehydrogenase family. Type 1 subfamily.

The protein resides in the cytoplasm. The enzyme catalyses N-acetyl-L-glutamate 5-semialdehyde + phosphate + NADP(+) = N-acetyl-L-glutamyl 5-phosphate + NADPH + H(+). The protein operates within amino-acid biosynthesis; L-arginine biosynthesis; N(2)-acetyl-L-ornithine from L-glutamate: step 3/4. Catalyzes the NADPH-dependent reduction of N-acetyl-5-glutamyl phosphate to yield N-acetyl-L-glutamate 5-semialdehyde. The protein is N-acetyl-gamma-glutamyl-phosphate reductase of Vibrio parahaemolyticus serotype O3:K6 (strain RIMD 2210633).